The primary structure comprises 203 residues: Undecaprenyl phosphate transporter A (203 aa).

5 helical membrane-spanning segments follow: residues 16 to 36 (AIFI…EIIL), 48 to 68 (LSIL…LLIL), 108 to 128 (YGVW…LITI), 137 to 157 (VVTF…GLIL), and 173 to 193 (LHTY…YFAI).

This sequence belongs to the DedA family.

It is found in the cell membrane. In terms of biological role, flippase that catalyzes the transport of undecaprenyl phosphate (UndP) across the cytoplasmic membrane, from the external side to the cytoplasmic side. Is involved in UndP recycling during peptidoglycan synthesis. The sequence is that of Undecaprenyl phosphate transporter A from Staphylococcus aureus (strain NCTC 8325 / PS 47).